The primary structure comprises 538 residues: Putative cysteine ligase BshC (538 aa).

Positions 248–268 form a coiled coil; sequence ISKYKEVQEGLRNQQEVIKEL.

Belongs to the BshC family.

Its function is as follows. Involved in bacillithiol (BSH) biosynthesis. May catalyze the last step of the pathway, the addition of cysteine to glucosamine malate (GlcN-Mal) to generate BSH. This is Putative cysteine ligase BshC from Bacillus cereus (strain G9842).